We begin with the raw amino-acid sequence, 564 residues long: Diacylglycerol kinase epsilon (564 aa).

The chain crosses the membrane as a helical span at residues 20–40 (LVLWTLCSVLLPVFITLWCSL). 2 consecutive Phorbol-ester/DAG-type zinc fingers follow at residues 57 to 106 (KHCW…RFPC) and 121 to 174 (PHHW…SEKC). Residues 212-353 (KQWTPLIILA…LDRWKVQVTN (142 aa)) form the DAGKc domain.

Belongs to the eukaryotic diacylglycerol kinase family. Highly expressed in brain and heart. In brain, highly expressed in Purkinje cells of the cerebellum, pyramidal cells of the hippocampus, mitral cells of the olfactory bulb, and neurons of the substantia nigra. Lower expression in neurons of the thalamus, superior olive, and lateral reticular nucleus is also detected. Expressed in platelets.

Its subcellular location is the membrane. The protein localises to the cytoplasm. It carries out the reaction a 1,2-diacyl-sn-glycerol + ATP = a 1,2-diacyl-sn-glycero-3-phosphate + ADP + H(+). The enzyme catalyses 1-hexadecanoyl-2-(5Z,8Z,11Z,14Z-eicosatetraenoyl)-sn-glycerol + ATP = 1-hexadecanoyl-2-(5Z,8Z,11Z,14Z-eicosatetraenoyl)-sn-glycero-3-phosphate + ADP + H(+). The catalysed reaction is 1-octadecanoyl-2-(5Z,8Z,11Z,14Z-eicosatetraenoyl)-sn-glycerol + ATP = 1-octadecanoyl-2-(5Z,8Z,11Z,14Z-eicosatetraenoyl)-sn-glycero-3-phosphate + ADP + H(+). It catalyses the reaction 1-eicosanoyl-2-(5Z,8Z,11Z,14Z)-eicosatetraenoyl-sn-glycerol + ATP = 1-eicosanoyl-2-(5Z,8Z,11Z,14Z)-eicosatetraenoyl-sn-glycero-3-phosphate + ADP + H(+). It carries out the reaction 1,2-di-(5Z,8Z,11Z,14Z)-eicosatetraenoyl-sn-glycerol + ATP = 1,2-di-(5Z,8Z,11Z,14Z)-eicosatetraenoyl-sn-glycero-3-phosphate + ADP + H(+). The enzyme catalyses 1-octadecanoyl-2-(9Z,12Z)-octadecadienoyl-sn-glycerol + ATP = 1-octadecanoyl-2-(9Z,12Z-octadecadienoyl)-sn-glycero-3-phosphate + ADP + H(+). The catalysed reaction is 1,2-di-(9Z,12Z-octadecadienoyl)-sn-glycerol + ATP = 1,2-di-(9Z,12Z-octadecadienoyl)-sn-glycero-3-phosphate + ADP + H(+). It catalyses the reaction 1,2-di-(9Z-octadecenoyl)-sn-glycerol + ATP = 1,2-di-(9Z-octadecenoyl)-sn-glycero-3-phosphate + ADP + H(+). The protein operates within lipid metabolism; glycerolipid metabolism. Functionally, membrane-bound diacylglycerol kinase that converts diacylglycerol/DAG into phosphatidic acid/phosphatidate/PA and regulates the respective levels of these two bioactive lipids. Thereby, acts as a central switch between the signaling pathways activated by these second messengers with different cellular targets and opposite effects in numerous biological processes. Also plays an important role in the biosynthesis of complex lipids. Displays specificity for diacylglycerol substrates with an arachidonoyl acyl chain at the sn-2 position, with the highest activity toward 1-octadecanoyl-2-(5Z,8Z,11Z,14Z-eicosatetraenoyl)-sn-glycerol the main diacylglycerol intermediate within the phosphatidylinositol turnover cycle. Can also phosphorylate diacylglycerol substrates with a linoleoyl acyl chain at the sn-2 position but much less efficiently. The chain is Diacylglycerol kinase epsilon (Dgke) from Mus musculus (Mouse).